We begin with the raw amino-acid sequence, 291 residues long: B-lymphocyte antigen CD20 (291 aa).

The Cytoplasmic portion of the chain corresponds to 1–44 (MSGPFPAEPTKGPLAMQPAPKVNLKRTSSLVGPTQSFFMRESKA). Phosphoserine is present on Ser29. The chain crosses the membrane as a helical span at residues 45-65 (LGAVQIMNGLFHITLGGLLMI). Residues 66 to 68 (PTG) lie on the Extracellular side of the membrane. A helical membrane pass occupies residues 69-89 (VFAPICLSVWYPLWGGIMYII). Residues 90–111 (SGSLLAAAAEKTSRKSLVKAKV) are Cytoplasmic-facing. The helical transmembrane segment at 112–132 (IMSSLSLFAAISGIILSIMDI) threads the bilayer. The Extracellular portion of the chain corresponds to 133 to 182 (LNMTLSHFLKMRRLELIQTSKPYVDIYDCEPSNSSEKNSPSTQYCNSIQS). The chain crosses the membrane as a helical span at residues 183-203 (VFLGILSAMLISAFFQKLVTA). At 204–291 (GIVENEWKRM…SLPVENEIAP (88 aa)) the chain is on the cytoplasmic side. Residue Cys214 is the site of S-palmitoyl cysteine attachment. Ser219 is subject to Phosphoserine. Residue Thr233 is modified to Phosphothreonine. The span at 261-270 (VQEEEEEEAE) shows a compositional bias: acidic residues. A disordered region spans residues 261 to 291 (VQEEEEEEAEINFPAPPQEQESLPVENEIAP).

Belongs to the MS4A family. In terms of assembly, forms homotetramers. Interacts with the heavy and light chains of cell surface IgM, the antigen-binding components of the BCR. Phosphorylated.

It is found in the cell membrane. Its function is as follows. B-lymphocyte-specific membrane protein that plays a role in the regulation of cellular calcium influx necessary for the development, differentiation, and activation of B-lymphocytes. Functions as a store-operated calcium (SOC) channel component promoting calcium influx after activation by the B-cell receptor/BCR. In Mus musculus (Mouse), this protein is B-lymphocyte antigen CD20 (Ms4a1).